The primary structure comprises 119 residues: Large ribosomal subunit protein bL20 (119 aa).

Belongs to the bacterial ribosomal protein bL20 family.

Binds directly to 23S ribosomal RNA and is necessary for the in vitro assembly process of the 50S ribosomal subunit. It is not involved in the protein synthesizing functions of that subunit. The chain is Large ribosomal subunit protein bL20 from Nitrosospira multiformis (strain ATCC 25196 / NCIMB 11849 / C 71).